Here is a 604-residue protein sequence, read N- to C-terminus: MVQSAPSTEAIQLPKTSESAQLKRIRHTMSHVMAMAVQKLFPKAQVTIGPWTETGFYYDFDTPEPFTEADLKAIKKEMVKIIQQKLPVVREEVSREEAQQRIEALGEPYKLEILQGLTEPITLYHLGDRWWDLCAGPHVETTAELNPKAFDLESVAGAYWRGDETKAQLQRIYGTAWETPEQLTEYKRRKEEALKRDHRKLGRELGLFLFADPVGPGLPLWTPKGTILRSTLEDFLKQEQMKRGYQSVVTPHLARVDLFKVSGHWQNYREDMFPMMAEDDEARGLEQGFVLKPMNCPFHIQIYKNELRSYRELPIRLAEFGTVYRYEQSGELGGLTRVRGFTVDDSHLFVRPDQLASEFLSVVDLILSVFKALNLKKFKARLSFRDPESDKYIGSDDVWEKAESAIQAAAETLGMDYFIGVGEAAFYGPKLDFIFQDALDREWQLGTVQVDYNLPERFDLEYVAEDGSRQRPVMIHRAPFGSLERLIGILIEEYAGDFPLWLAPEQIRLLPVTETVLDYCQQVADQLRAIGVRVQVDCSGDRLGKLIRNAEKAKIPVMAVIGAQEAESETLSIRTRATGDLGSLTVADLTKRLSSAIAEKLPHL.

Residues 197 to 499 (DHRKLGRELG…LIEEYAGDFP (303 aa)) form a catalytic region. Zn(2+) is bound by residues cysteine 296, histidine 347, and histidine 476.

The protein belongs to the class-II aminoacyl-tRNA synthetase family. Homodimer. It depends on Zn(2+) as a cofactor.

It localises to the cytoplasm. The enzyme catalyses tRNA(Thr) + L-threonine + ATP = L-threonyl-tRNA(Thr) + AMP + diphosphate + H(+). Functionally, catalyzes the attachment of threonine to tRNA(Thr) in a two-step reaction: L-threonine is first activated by ATP to form Thr-AMP and then transferred to the acceptor end of tRNA(Thr). Also edits incorrectly charged L-seryl-tRNA(Thr). This chain is Threonine--tRNA ligase, found in Synechococcus elongatus (strain ATCC 33912 / PCC 7942 / FACHB-805) (Anacystis nidulans R2).